A 573-amino-acid chain; its full sequence is Poly(ribitol-phosphate) beta-N-acetylglucosaminyltransferase TarS (573 aa).

UDP-N-acetyl-alpha-D-glucosamine-binding positions include proline 9, aspartate 41, asparagine 68, arginine 76, 92–94 (DSD), arginine 127, and glutamate 178. Residue aspartate 94 participates in Mn(2+) binding. Aspartate 179 serves as the catalytic Proton acceptor. Residues arginine 207 and 211-213 (HMS) each bind UDP-N-acetyl-alpha-D-glucosamine.

Belongs to the glycosyltransferase 2 family. As to quaternary structure, homotrimer. Mn(2+) serves as cofactor.

It catalyses the reaction 4-O-[(D-ribitylphospho)(n)-di{(2R)-glycerylphospho}]-N-acetyl-beta-D-mannosaminyl-(1-&gt;4)-N-acetyl-alpha-D-glucosaminyl di-trans,octa-cis-undecaprenyl diphosphate + n UDP-N-acetyl-alpha-D-glucosamine = 4-O-([2-N-acetyl-beta-D-glucosaminyl-1-D-ribitylphospho](n)-di{[2R]-1-glycerylphospho})-N-acetyl-beta-D-mannosaminyl-(1-&gt;4)-N-acetyl-alpha-D-glucosaminyl di-trans,octa-cis-undecaprenyl diphosphate + n UDP + n H(+). Its pathway is cell wall biogenesis; poly(ribitol phosphate) teichoic acid biosynthesis. In terms of biological role, attaches beta-O-GlcNAc (beta-O-N-acetyl-D-glucosamine) residues to the C4 position of poly(RboP)-wall teichoic acids (WTAs). Prefers UDP-GlcNAc as a donor substrate and is specific for poly(ribitol phosphate) WTAs. Can also use UDP-Glc and UDP-GalNAc, but not UDP-galactose or UDP-glucuronic acid. Mediates beta-lactam resistance in methicillin resistant Staphylococcus aureus (MRSA) strains. The sequence is that of Poly(ribitol-phosphate) beta-N-acetylglucosaminyltransferase TarS from Staphylococcus aureus (strain MW2).